A 326-amino-acid chain; its full sequence is MVTINNARKILQRVDTLPLYLHAYAFHLNMRLERVLPADLLDIASENNLRGVKIHVLDGERFSLGNMDDKELSAFGDKARRLNLDIHIETSASDKASIDEAVAIALKTGASSVRFYPRYEGNLRDVLSIIANDIAYVRETYQDSGLTFTIEQHEDLKSHELVSLVKESEMESLSLLFDFANMINANEHPIDALKTMAPHITQVHIKDALIVKEPGGLGHKACISGQGDMPFKALLTHLICLGDDEPQVTAYGLEEEVDYYAPAFRFEDEDDNPWIPYRQMSETPLPENHLLDARLRKEKEDAINQINHVRNVLQQIKQEANHLLNH.

This is an uncharacterized protein from Escherichia coli (strain K12).